We begin with the raw amino-acid sequence, 218 residues long: Ras-related protein RabO (218 aa).

GTP is bound at residue 15-22 (GDYCVGKT). The short motif at 37–45 (RNCNIGVDF) is the Effector region element. GTP contacts are provided by residues 63–67 (DTGGQ) and 122–125 (NKID). Cysteine 215 is modified (cysteine methyl ester). Cysteine 215 carries the S-geranylgeranyl cysteine lipid modification. Residues 216 to 218 (FIL) constitute a propeptide, removed in mature form.

It belongs to the small GTPase superfamily. Rab family.

Its subcellular location is the cell membrane. This chain is Ras-related protein RabO (rabO), found in Dictyostelium discoideum (Social amoeba).